The sequence spans 619 residues: ATP-dependent DNA helicase RecQ (619 aa).

The region spanning 37–205 is the Helicase ATP-binding domain; the sequence is INAALNGQDA…LRHLNLKNLH (169 aa). ATP is bound at residue 50–57; that stretch reads MATGNGKS. Residues 149-152 carry the DEAH box motif; that stretch reads DEAH. The region spanning 229–374 is the Helicase C-terminal domain; the sequence is QLTRFVLAQK…QIEQHKLEAI (146 aa). Zn(2+) contacts are provided by Cys-383, Cys-400, Cys-403, and Cys-406. The HRDC domain occupies 535–615; that stretch reads ANYDKDLFAR…QEHKAILANA (81 aa).

Belongs to the helicase family. RecQ subfamily. The cofactor is Mg(2+). It depends on Zn(2+) as a cofactor.

The enzyme catalyses Couples ATP hydrolysis with the unwinding of duplex DNA by translocating in the 3'-5' direction.. The catalysed reaction is ATP + H2O = ADP + phosphate + H(+). Functionally, an ATP-dependent DNA helicase which unwinds DNA in a 3'-5' direction. Plays a role in recombination. The protein is ATP-dependent DNA helicase RecQ of Haemophilus influenzae (strain ATCC 51907 / DSM 11121 / KW20 / Rd).